Consider the following 508-residue polypeptide: CXXC-type zinc finger protein 1 (508 aa).

The segment at 10–47 (EDVWKERCMNCIRCNDEKNCGTCWPCRNGKTCDMRKCF) adopts a CXXC-type zinc-finger fold. 2 disordered regions span residues 95-156 (QQVE…EPDK) and 453-508 (KSQS…TQNN). 2 stretches are compositionally biased toward low complexity: residues 113-123 (AAAAAQQRKAN) and 454-481 (SQST…SSSS).

In terms of assembly, component of the SET2 complex (also known as the SET1/COMPASS complex), which contains at least set-2, swd-2.1, cfp-1, rbbp-5, wdr-5.1, dpy-30 and ash-2. Within the complex, interacts with wdr-5.1, ash-2 and dpy-30. Also interacts with the SIN3S complex, which contains at least sin-3, hda-1, athp-1 and mrg-1. Interacts with sin-3, hda-1 and mrg-1.

It localises to the nucleus. Its function is as follows. Transcriptional activator that exhibits a unique DNA binding specificity for CpG motifs; enriched at promoters containing the trimethylation mark on histone H3 'Lys-4' (H3K4me3). Forms part of the SET2 complex and interacts with the SIN3S HDAC complex at promoters. Required for H3K4 trimethylation and plays a repressive role in the expression of heat shock and salt-inducible genes. Required for fertility, in cooperation with class I histone deacetylases (HDACs). The polypeptide is CXXC-type zinc finger protein 1 (Caenorhabditis elegans).